The sequence spans 47 residues: Delta-actitoxin-Ael1a (47 aa).

Cystine bridges form between C4–C44, C6–C34, and C27–C45.

This sequence belongs to the sea anemone sodium channel inhibitory toxin family. Type I subfamily. In terms of tissue distribution, expressed in ectodermal glands. Not expressed in nematocytes.

It is found in the secreted. Functionally, binds specifically to voltage-gated sodium channels (Nav), thereby delaying their inactivation during signal transduction. It strongly stimulates mammalian cardiac muscle contraction. Paralyzes the shore crab (C.maenas) by tetanic contractions after intramuscular injection. In Anthopleura elegantissima (Green aggregating anemone), this protein is Delta-actitoxin-Ael1a.